We begin with the raw amino-acid sequence, 265 residues long: 5'-nucleotidase SurE (265 aa).

The a divalent metal cation site is built by Asp-11, Asp-12, Ser-43, and Asn-101.

It belongs to the SurE nucleotidase family. It depends on a divalent metal cation as a cofactor.

It is found in the cytoplasm. The catalysed reaction is a ribonucleoside 5'-phosphate + H2O = a ribonucleoside + phosphate. Its function is as follows. Nucleotidase that shows phosphatase activity on nucleoside 5'-monophosphates. This is 5'-nucleotidase SurE from Synechococcus sp. (strain CC9311).